Consider the following 62-residue polypeptide: Large ribosomal subunit protein bL28 (62 aa).

Belongs to the bacterial ribosomal protein bL28 family.

This chain is Large ribosomal subunit protein bL28, found in Frankia casuarinae (strain DSM 45818 / CECT 9043 / HFP020203 / CcI3).